The primary structure comprises 314 residues: Phospho-N-acetylmuramoyl-pentapeptide-transferase (314 aa).

A run of 10 helical transmembrane segments spans residues Leu4–Ile24, Thr52–Ile72, Leu77–Tyr97, Ile111–Phe131, Leu146–Ala166, Leu169–Ala189, Ile191–Phe211, Ile219–Tyr239, Val242–Ile262, and Ile294–Leu314.

This sequence belongs to the glycosyltransferase 4 family. MraY subfamily. The cofactor is Mg(2+).

It is found in the cell inner membrane. The catalysed reaction is UDP-N-acetyl-alpha-D-muramoyl-L-alanyl-gamma-D-glutamyl-meso-2,6-diaminopimeloyl-D-alanyl-D-alanine + di-trans,octa-cis-undecaprenyl phosphate = di-trans,octa-cis-undecaprenyl diphospho-N-acetyl-alpha-D-muramoyl-L-alanyl-D-glutamyl-meso-2,6-diaminopimeloyl-D-alanyl-D-alanine + UMP. It functions in the pathway cell wall biogenesis; peptidoglycan biosynthesis. In terms of biological role, catalyzes the initial step of the lipid cycle reactions in the biosynthesis of the cell wall peptidoglycan: transfers peptidoglycan precursor phospho-MurNAc-pentapeptide from UDP-MurNAc-pentapeptide onto the lipid carrier undecaprenyl phosphate, yielding undecaprenyl-pyrophosphoryl-MurNAc-pentapeptide, known as lipid I. This is Phospho-N-acetylmuramoyl-pentapeptide-transferase from Petrotoga mobilis (strain DSM 10674 / SJ95).